Reading from the N-terminus, the 108-residue chain is Nucleoid-associated protein Pmen_2646 (108 aa).

Positions 1–25 are disordered; the sequence is MMKGGMAGLMKQAQQMQEKMQKMQE.

The protein belongs to the YbaB/EbfC family. As to quaternary structure, homodimer.

Its subcellular location is the cytoplasm. The protein resides in the nucleoid. Functionally, binds to DNA and alters its conformation. May be involved in regulation of gene expression, nucleoid organization and DNA protection. The polypeptide is Nucleoid-associated protein Pmen_2646 (Ectopseudomonas mendocina (strain ymp) (Pseudomonas mendocina)).